The primary structure comprises 54 residues: Ovomucoid (54 aa).

Positions 4-54 constitute a Kazal-like domain; it reads VDCSDYPKPVCTLEDMPLCGSDNITYHNKCYFCNAVAHSNGTLTFSHFGKC. Disulfide bonds link cysteine 6–cysteine 36, cysteine 14–cysteine 33, and cysteine 22–cysteine 54. N-linked (GlcNAc...) asparagine glycosylation is present at asparagine 43.

It is found in the secreted. The polypeptide is Ovomucoid (Carpococcyx renauldi (Coral-billed ground-cuckoo)).